Here is an 887-residue protein sequence, read N- to C-terminus: Pyruvate dehydrogenase E1 component (887 aa).

As to quaternary structure, homodimer. Part of the PDH complex, consisting of multiple copies of pyruvate dehydrogenase (E1), dihydrolipoamide acetyltransferase (E2) and lipoamide dehydrogenase (E3). Thiamine diphosphate serves as cofactor.

The catalysed reaction is N(6)-[(R)-lipoyl]-L-lysyl-[protein] + pyruvate + H(+) = N(6)-[(R)-S(8)-acetyldihydrolipoyl]-L-lysyl-[protein] + CO2. Its function is as follows. Component of the pyruvate dehydrogenase (PDH) complex, that catalyzes the overall conversion of pyruvate to acetyl-CoA and CO(2). The sequence is that of Pyruvate dehydrogenase E1 component (aceE) from Buchnera aphidicola subsp. Acyrthosiphon pisum (strain APS) (Acyrthosiphon pisum symbiotic bacterium).